We begin with the raw amino-acid sequence, 453 residues long: Bifunctional protein GlmU (453 aa).

The segment at 1–225 (MNIVILAAGT…EWETLGVNSK (225 aa)) is pyrophosphorylase. UDP-N-acetyl-alpha-D-glucosamine is bound by residues 6-9 (LAAG), Lys20, Gln71, 76-77 (GT), 98-100 (YGD), Gly135, Glu150, Asn165, and Asn223. Asp100 is a binding site for Mg(2+). Asn223 provides a ligand contact to Mg(2+). Residues 226–246 (AQLAELERIHQRNVADALLVD) form a linker region. The segment at 247 to 453 (GVTLADPARV…GYVRPVKKKS (207 aa)) is N-acetyltransferase. Residues Arg329 and Lys347 each coordinate UDP-N-acetyl-alpha-D-glucosamine. His359 acts as the Proton acceptor in catalysis. Positions 362 and 373 each coordinate UDP-N-acetyl-alpha-D-glucosamine. Acetyl-CoA-binding positions include Ala376, 382-383 (NY), Ser401, and Ala419.

The protein in the N-terminal section; belongs to the N-acetylglucosamine-1-phosphate uridyltransferase family. In the C-terminal section; belongs to the transferase hexapeptide repeat family. As to quaternary structure, homotrimer. Requires Mg(2+) as cofactor.

Its subcellular location is the cytoplasm. The enzyme catalyses alpha-D-glucosamine 1-phosphate + acetyl-CoA = N-acetyl-alpha-D-glucosamine 1-phosphate + CoA + H(+). The catalysed reaction is N-acetyl-alpha-D-glucosamine 1-phosphate + UTP + H(+) = UDP-N-acetyl-alpha-D-glucosamine + diphosphate. It participates in nucleotide-sugar biosynthesis; UDP-N-acetyl-alpha-D-glucosamine biosynthesis; N-acetyl-alpha-D-glucosamine 1-phosphate from alpha-D-glucosamine 6-phosphate (route II): step 2/2. Its pathway is nucleotide-sugar biosynthesis; UDP-N-acetyl-alpha-D-glucosamine biosynthesis; UDP-N-acetyl-alpha-D-glucosamine from N-acetyl-alpha-D-glucosamine 1-phosphate: step 1/1. It functions in the pathway bacterial outer membrane biogenesis; LPS lipid A biosynthesis. Its function is as follows. Catalyzes the last two sequential reactions in the de novo biosynthetic pathway for UDP-N-acetylglucosamine (UDP-GlcNAc). The C-terminal domain catalyzes the transfer of acetyl group from acetyl coenzyme A to glucosamine-1-phosphate (GlcN-1-P) to produce N-acetylglucosamine-1-phosphate (GlcNAc-1-P), which is converted into UDP-GlcNAc by the transfer of uridine 5-monophosphate (from uridine 5-triphosphate), a reaction catalyzed by the N-terminal domain. This chain is Bifunctional protein GlmU, found in Burkholderia orbicola (strain AU 1054).